Reading from the N-terminus, the 239-residue chain is Ribosomal RNA small subunit methyltransferase G (239 aa).

S-adenosyl-L-methionine contacts are provided by residues glycine 78, phenylalanine 83, 129-130 (AE), and arginine 148.

This sequence belongs to the methyltransferase superfamily. RNA methyltransferase RsmG family.

Its subcellular location is the cytoplasm. Specifically methylates the N7 position of a guanine in 16S rRNA. The sequence is that of Ribosomal RNA small subunit methyltransferase G from Clostridium botulinum (strain Alaska E43 / Type E3).